The chain runs to 758 residues: 5-methyltetrahydropteroyltriglutamate--homocysteine methyltransferase (758 aa).

5-methyltetrahydropteroyltri-L-glutamate contacts are provided by residues 17–20 (RELK) and Lys-117. L-homocysteine contacts are provided by residues 434-436 (IGS) and Glu-487. Residues 434–436 (IGS) and Glu-487 each bind L-methionine. Residues 518-519 (RC) and Trp-564 each bind 5-methyltetrahydropteroyltri-L-glutamate. Asp-602 is a binding site for L-homocysteine. L-methionine is bound at residue Asp-602. Position 608 (Glu-608) interacts with 5-methyltetrahydropteroyltri-L-glutamate. His-644, Cys-646, and Glu-668 together coordinate Zn(2+). The active-site Proton donor is the His-697. Cys-729 is a binding site for Zn(2+).

The protein belongs to the vitamin-B12 independent methionine synthase family. It depends on Zn(2+) as a cofactor.

The catalysed reaction is 5-methyltetrahydropteroyltri-L-glutamate + L-homocysteine = tetrahydropteroyltri-L-glutamate + L-methionine. The protein operates within amino-acid biosynthesis; L-methionine biosynthesis via de novo pathway; L-methionine from L-homocysteine (MetE route): step 1/1. Functionally, catalyzes the transfer of a methyl group from 5-methyltetrahydrofolate to homocysteine resulting in methionine formation. This is 5-methyltetrahydropteroyltriglutamate--homocysteine methyltransferase from Sodalis glossinidius (strain morsitans).